A 299-amino-acid chain; its full sequence is Oxygen-dependent coproporphyrinogen-III oxidase (299 aa).

Residue Ser92 participates in substrate binding. Mn(2+)-binding residues include His96 and His106. The active-site Proton donor is His106. 108–110 (NVR) provides a ligand contact to substrate. Residues His145 and His175 each contribute to the Mn(2+) site. An important for dimerization region spans residues 240–275 (YVEFNLVWDRGTLFGLQTGGRTESILMSMPPLVRWE). 258-260 (GGR) is a substrate binding site.

It belongs to the aerobic coproporphyrinogen-III oxidase family. As to quaternary structure, homodimer. The cofactor is Mn(2+).

It localises to the cytoplasm. It carries out the reaction coproporphyrinogen III + O2 + 2 H(+) = protoporphyrinogen IX + 2 CO2 + 2 H2O. It participates in porphyrin-containing compound metabolism; protoporphyrin-IX biosynthesis; protoporphyrinogen-IX from coproporphyrinogen-III (O2 route): step 1/1. Involved in the heme biosynthesis. Catalyzes the aerobic oxidative decarboxylation of propionate groups of rings A and B of coproporphyrinogen-III to yield the vinyl groups in protoporphyrinogen-IX. In Escherichia coli (strain SMS-3-5 / SECEC), this protein is Oxygen-dependent coproporphyrinogen-III oxidase.